The sequence spans 248 residues: MWLGVITLFPEMFRAVTDFGVTGRAVKNGLLELHTWNPRDFTHDRHNTVDDRPYGGGPGMLMMVQPLRDAIHAAKAAAGEEAKVIYLSPQGRKLDQQGVTELAKSSRLILVCGRYEGIDERIIQTEVDEEWSVGDYVLSGGELPAMTMIDAVSRLVPGVLGKQASAEQDSFSDGLLDCPHYTRPESLDGLDVPAVLLSGNHEQIRLWRLQQSLGRTLLRRPELLQNLALTDEQSTLLAQFVEAMDKHA.

S-adenosyl-L-methionine-binding positions include Gly113 and Val133 to Leu138.

Belongs to the RNA methyltransferase TrmD family. Homodimer.

The protein localises to the cytoplasm. The enzyme catalyses guanosine(37) in tRNA + S-adenosyl-L-methionine = N(1)-methylguanosine(37) in tRNA + S-adenosyl-L-homocysteine + H(+). Functionally, specifically methylates guanosine-37 in various tRNAs. The chain is tRNA (guanine-N(1)-)-methyltransferase from Shewanella sp. (strain W3-18-1).